A 396-amino-acid polypeptide reads, in one-letter code: S-adenosylmethionine synthase (396 aa).

ATP is bound at residue His16. Position 18 (Asp18) interacts with Mg(2+). Glu44 provides a ligand contact to K(+). Residues Glu57 and Gln100 each contribute to the L-methionine site. Residues 100–110 (QSPDINQGVDR) are flexible loop. Residues 165-167 (DAK), Asp240, 246-247 (RK), Ala263, and Lys267 contribute to the ATP site. Asp240 is an L-methionine binding site. Position 271 (Lys271) interacts with L-methionine.

Belongs to the AdoMet synthase family. In terms of assembly, homotetramer; dimer of dimers. It depends on Mg(2+) as a cofactor. Requires K(+) as cofactor.

The protein localises to the cytoplasm. The enzyme catalyses L-methionine + ATP + H2O = S-adenosyl-L-methionine + phosphate + diphosphate. It functions in the pathway amino-acid biosynthesis; S-adenosyl-L-methionine biosynthesis; S-adenosyl-L-methionine from L-methionine: step 1/1. In terms of biological role, catalyzes the formation of S-adenosylmethionine (AdoMet) from methionine and ATP. The overall synthetic reaction is composed of two sequential steps, AdoMet formation and the subsequent tripolyphosphate hydrolysis which occurs prior to release of AdoMet from the enzyme. The polypeptide is S-adenosylmethionine synthase (Pseudomonas fluorescens (strain SBW25)).